Consider the following 444-residue polypeptide: Glycerol-3-phosphate transporter (444 aa).

The Cytoplasmic segment spans residues 1 to 36 (MLNIFKPAPHIERLDDSKMDAAYKRLRLQVFIGIFI). The chain crosses the membrane as a helical span at residues 37 to 57 (GYAGYYLLRKNFAFAIPYLQE). The Extracellular segment spans residues 58–63 (QGFSKT). The helical transmembrane segment at 64–84 (ELGLVLAAVSIAYGFSKFIMG) threads the bilayer. The Cytoplasmic segment spans residues 85–93 (MVSDRCNPR). The helical transmembrane segment at 94 to 112 (YFLATGLFLSAIVNILFVS) threads the bilayer. Residues 113-120 (MPWVTSSV) lie on the Extracellular side of the membrane. The chain crosses the membrane as a helical span at residues 121–141 (TIMFIFMFINGWFQGMGWPPC). The Cytoplasmic segment spans residues 142-160 (GRTMAHWFSISERGTKMSI). A helical membrane pass occupies residues 161 to 180 (WNVAHNIGGGILAPLVTLGI). At 181 to 189 (AMFVTWKSV) the chain is on the extracellular side. A helical membrane pass occupies residues 190-207 (FFFPAIIAIIISFLIVLL). Residues 208 to 261 (VRDTPQSCGLPPIEEYRNDYPKHAFKNQEKELTTKEILFQYVLNNKFLWYIAFA) are Cytoplasmic-facing. A helical membrane pass occupies residues 262–282 (NVFVYFVRYGVVDWAPTYLTE). At 283–287 (AKGFS) the chain is on the extracellular side. A helical membrane pass occupies residues 288 to 308 (PEDSRWSYFLYEYAGIPGTIL). The Cytoplasmic segment spans residues 309 to 321 (CGWISDRFFKSRR). Residues 322-341 (APAGVLFMAGVFIAVLVYWL) traverse the membrane as a helical segment. Over 342 to 346 (NPAGN) the chain is Extracellular. Residues 347–368 (PLVDNIALISIGFLIYGPVMLI) traverse the membrane as a helical segment. Residues 369–387 (GLQAIDLAPKKAAGTAAGL) lie on the Cytoplasmic side of the membrane. A helical transmembrane segment spans residues 388–409 (TGFFGYIGGSAFANAIMGFVVD). Residues 410–414 (RFNWN) are Extracellular-facing. Residues 415–435 (GGFIMLISSCILAIVFLALTW) form a helical membrane-spanning segment. Topologically, residues 436–444 (NTGKRAEHV) are cytoplasmic.

Belongs to the major facilitator superfamily. Organophosphate:Pi antiporter (OPA) (TC 2.A.1.4) family.

The protein localises to the cell membrane. In terms of biological role, responsible for glycerol-3-phosphate uptake. This Bacillus subtilis (strain 168) protein is Glycerol-3-phosphate transporter (glpT).